The sequence spans 273 residues: Formamidopyrimidine-DNA glycosylase (273 aa).

Catalysis depends on P2, which acts as the Schiff-base intermediate with DNA. Catalysis depends on E3, which acts as the Proton donor. The Proton donor; for beta-elimination activity role is filled by K58. Residues H91, R109, and R154 each coordinate DNA. Residues 239–273 (FVYARTGEPCRICNAPVRQIVQGQRSTFYCPNCQK) form an FPG-type zinc finger. The active-site Proton donor; for delta-elimination activity is the R263.

Belongs to the FPG family. As to quaternary structure, monomer. Zn(2+) is required as a cofactor.

It catalyses the reaction Hydrolysis of DNA containing ring-opened 7-methylguanine residues, releasing 2,6-diamino-4-hydroxy-5-(N-methyl)formamidopyrimidine.. It carries out the reaction 2'-deoxyribonucleotide-(2'-deoxyribose 5'-phosphate)-2'-deoxyribonucleotide-DNA = a 3'-end 2'-deoxyribonucleotide-(2,3-dehydro-2,3-deoxyribose 5'-phosphate)-DNA + a 5'-end 5'-phospho-2'-deoxyribonucleoside-DNA + H(+). Functionally, involved in base excision repair of DNA damaged by oxidation or by mutagenic agents. Acts as a DNA glycosylase that recognizes and removes damaged bases. Has a preference for oxidized purines, such as 7,8-dihydro-8-oxoguanine (8-oxoG). Has AP (apurinic/apyrimidinic) lyase activity and introduces nicks in the DNA strand. Cleaves the DNA backbone by beta-delta elimination to generate a single-strand break at the site of the removed base with both 3'- and 5'-phosphates. This chain is Formamidopyrimidine-DNA glycosylase, found in Herminiimonas arsenicoxydans.